Consider the following 419-residue polypeptide: Lipoyl synthase, mitochondrial (419 aa).

Residues 1 to 26 (MAVCAGRLKCFGNPAVSLRTAASRAY) constitute a mitochondrion transit peptide. Residues 28-47 (TTTSPDPAIPSSSSASSSSA) are compositionally biased toward low complexity. Positions 28–61 (TTTSPDPAIPSSSSASSSSALPKRPQTSFRDKLN) are disordered. [4Fe-4S] cluster-binding residues include cysteine 136, cysteine 141, cysteine 147, cysteine 167, cysteine 171, cysteine 174, and serine 382. In terms of domain architecture, Radical SAM core spans 150–371 (GSSKSAATAT…KDRALEMGFL (222 aa)). The disordered stretch occupies residues 399 to 419 (AESTGPESTNVPNVTPDAIVR).

This sequence belongs to the radical SAM superfamily. Lipoyl synthase family. [4Fe-4S] cluster serves as cofactor.

The protein localises to the mitochondrion. It catalyses the reaction [[Fe-S] cluster scaffold protein carrying a second [4Fe-4S](2+) cluster] + N(6)-octanoyl-L-lysyl-[protein] + 2 oxidized [2Fe-2S]-[ferredoxin] + 2 S-adenosyl-L-methionine + 4 H(+) = [[Fe-S] cluster scaffold protein] + N(6)-[(R)-dihydrolipoyl]-L-lysyl-[protein] + 4 Fe(3+) + 2 hydrogen sulfide + 2 5'-deoxyadenosine + 2 L-methionine + 2 reduced [2Fe-2S]-[ferredoxin]. It participates in protein modification; protein lipoylation via endogenous pathway; protein N(6)-(lipoyl)lysine from octanoyl-[acyl-carrier-protein]: step 2/2. Functionally, catalyzes the radical-mediated insertion of two sulfur atoms into the C-6 and C-8 positions of the octanoyl moiety bound to the lipoyl domains of lipoate-dependent enzymes, thereby converting the octanoylated domains into lipoylated derivatives. This Coccidioides posadasii (strain C735) (Valley fever fungus) protein is Lipoyl synthase, mitochondrial.